Reading from the N-terminus, the 522-residue chain is Endochitinase 11 (522 aa).

An N-terminal signal peptide occupies residues 1–24; that stretch reads MLFSMVMFTERWWVGSKDCPRVPA. 2 N-linked (GlcNAc...) asparagine glycosylation sites follow: asparagine 148 and asparagine 275. In terms of domain architecture, GH18 spans 235-522; it reads KHVYAPYVDF…ALTCLRNSTA (288 aa). The active-site Proton donor is glutamate 346. 2 N-linked (GlcNAc...) asparagine glycosylation sites follow: asparagine 455 and asparagine 519.

It belongs to the glycosyl hydrolase 18 family. Chitinase class V subfamily.

It localises to the secreted. The enzyme catalyses Random endo-hydrolysis of N-acetyl-beta-D-glucosaminide (1-&gt;4)-beta-linkages in chitin and chitodextrins.. Secreted chitinase involved in the degradation of chitin, a component of the cell walls of fungi and exoskeletal elements of some animals (including worms and arthropods). Participates in the infection process and directly acts in the penetration process of the host cuticle. This chain is Endochitinase 11 (chi11), found in Metarhizium anisopliae (Entomophthora anisopliae).